A 403-amino-acid polypeptide reads, in one-letter code: Phosphoglycerate kinase (403 aa).

Residues Asp21–Asn23, Arg36, His59–Arg62, Arg119, and Arg159 each bind substrate. ATP contacts are provided by residues Lys214, Gly301, Glu332, and Gly359–Ser362.

The protein belongs to the phosphoglycerate kinase family. In terms of assembly, monomer.

It is found in the cytoplasm. The enzyme catalyses (2R)-3-phosphoglycerate + ATP = (2R)-3-phospho-glyceroyl phosphate + ADP. Its pathway is carbohydrate degradation; glycolysis; pyruvate from D-glyceraldehyde 3-phosphate: step 2/5. This Lactobacillus helveticus (strain DPC 4571) protein is Phosphoglycerate kinase.